The primary structure comprises 2164 residues: Hemagglutinin A (2164 aa).

Positions 1 to 25 are cleaved as a signal peptide; the sequence is MRKLNSLFSLAVLLSLLCWGQTAAA. Peptidase C25-like regions lie at residues 26–539, 540–991, and 992–1443; these read QGGP…TPPP, GGSS…TPPP, and GGTS…TPPP. Disordered regions lie at residues 493–512 and 520–541; these read WDAP…LSES and SWKT…PPGG. Low complexity predominate over residues 496-508; it reads PNGTPNPNPGTTT.

The protein belongs to the peptidase C25 family.

In terms of biological role, agglutinates erythrocytes. The chain is Hemagglutinin A (hagA) from Porphyromonas gingivalis (strain ATCC BAA-308 / W83).